The chain runs to 147 residues: Hemoglobin subunit deltaH (147 aa).

The 145-residue stretch at 3 to 147 folds into the Globin domain; sequence RLTDSEKAEV…MANALAHKYH (145 aa). Heme b-binding residues include His-64 and His-93.

It belongs to the globin family. In terms of assembly, heterotetramer of two delta chains and two alpha chains. In terms of tissue distribution, red blood cells.

The protein is Hemoglobin subunit deltaH of Heterohyrax brucei (Yellow-spotted hyrax).